The chain runs to 244 residues: 23S rRNA (guanosine-2'-O-)-methyltransferase RlmB (244 aa).

3 residues coordinate S-adenosyl-L-methionine: G196, I216, and L225.

The protein belongs to the class IV-like SAM-binding methyltransferase superfamily. RNA methyltransferase TrmH family. RlmB subfamily. Homodimer.

The protein resides in the cytoplasm. The catalysed reaction is guanosine(2251) in 23S rRNA + S-adenosyl-L-methionine = 2'-O-methylguanosine(2251) in 23S rRNA + S-adenosyl-L-homocysteine + H(+). Specifically methylates the ribose of guanosine 2251 in 23S rRNA. The protein is 23S rRNA (guanosine-2'-O-)-methyltransferase RlmB of Pectobacterium atrosepticum (strain SCRI 1043 / ATCC BAA-672) (Erwinia carotovora subsp. atroseptica).